The following is an 82-amino-acid chain: Large ribosomal subunit protein bL27c (82 aa).

Residues 1 to 22 (MAHKKGAGSTKNGRDSNSKRLG) are disordered.

This sequence belongs to the bacterial ribosomal protein bL27 family.

Its subcellular location is the plastid. It localises to the chloroplast. The chain is Large ribosomal subunit protein bL27c (rpl27) from Chrysotila carterae (Marine alga).